We begin with the raw amino-acid sequence, 487 residues long: 3-octaprenyl-4-hydroxybenzoate carboxy-lyase (487 aa).

Asparagine 172 lines the Mn(2+) pocket. Prenylated FMN-binding positions include 175-177 (IYR), 189-191 (RWL), and 194-195 (RG). Glutamate 238 serves as a coordination point for Mn(2+). Aspartate 287 functions as the Proton donor in the catalytic mechanism.

The protein belongs to the UbiD family. Homohexamer. Prenylated FMN serves as cofactor. The cofactor is Mn(2+).

The protein localises to the cell membrane. It catalyses the reaction a 4-hydroxy-3-(all-trans-polyprenyl)benzoate + H(+) = a 2-(all-trans-polyprenyl)phenol + CO2. It functions in the pathway cofactor biosynthesis; ubiquinone biosynthesis. Functionally, catalyzes the decarboxylation of 3-octaprenyl-4-hydroxy benzoate to 2-octaprenylphenol, an intermediate step in ubiquinone biosynthesis. The chain is 3-octaprenyl-4-hydroxybenzoate carboxy-lyase from Nitrosomonas eutropha (strain DSM 101675 / C91 / Nm57).